The primary structure comprises 309 residues: ATP synthase gamma chain (309 aa).

This sequence belongs to the ATPase gamma chain family. F-type ATPases have 2 components, CF(1) - the catalytic core - and CF(0) - the membrane proton channel. CF(1) has five subunits: alpha(3), beta(3), gamma(1), delta(1), epsilon(1). CF(0) has three main subunits: a, b and c.

Its subcellular location is the cell membrane. Its function is as follows. Produces ATP from ADP in the presence of a proton gradient across the membrane. The gamma chain is believed to be important in regulating ATPase activity and the flow of protons through the CF(0) complex. This Mycobacterium sp. (strain JLS) protein is ATP synthase gamma chain.